We begin with the raw amino-acid sequence, 170 residues long: Probable chemoreceptor glutamine deamidase CheD 3 (170 aa).

The protein belongs to the CheD family.

The enzyme catalyses L-glutaminyl-[protein] + H2O = L-glutamyl-[protein] + NH4(+). Functionally, probably deamidates glutamine residues to glutamate on methyl-accepting chemotaxis receptors (MCPs), playing an important role in chemotaxis. The chain is Probable chemoreceptor glutamine deamidase CheD 3 from Dechloromonas aromatica (strain RCB).